The primary structure comprises 579 residues: Cytochrome P450 monooxygenase ORF6 (579 aa).

N-linked (GlcNAc...) asparagine glycosylation is present at Asn-2. The chain crosses the membrane as a helical span at residues 7-29; that stretch reads PLGSFVGTTLLLFILYKLVKLAY. N-linked (GlcNAc...) asparagine glycosylation is found at Asn-194 and Asn-390. Cys-512 lines the heme pocket.

The protein belongs to the cytochrome P450 family. Heme is required as a cofactor.

The protein localises to the membrane. Its pathway is sesquiterpene biosynthesis. Cytochrome P450 monooxygenase; part of the gene cluster that mediates the biosynthesis of PR-toxin, a bicyclic sesquiterpene belonging to the eremophilane class and acting as a mycotoxin. The first step of the pathway is catalyzed by the aristolochene synthase which performs the cyclization of trans,trans-farnesyl diphosphate (FPP) to the bicyclic sesquiterpene aristolochene. Following the formation of aristolochene, the non-oxygenated aristolochene is converted to the trioxygenated intermediate eremofortin B, via 7-epi-neopetasone. This conversion appears to involve three enzymes, a hydroxysterol oxidase-like enzyme, the quinone-oxidase prx3 that forms the quinone-type-structure in the bicyclic nucleus of aristolochene with the C8-oxo group and the C-3 hydroxyl group, and the P450 monooxygenase ORF6 that introduces the epoxide at the double bond between carbons 1 and 2. No monoxy or dioxy-intermediates have been reported to be released to the broth, so these three early oxidative reactions may be coupled together. Eremofortin B is further oxidized by another P450 monooxygenase, that introduces a second epoxide between carbons 7 and 11 prior to acetylation to eremofortin A by the acetyltransferase ORF8. The second epoxidation may be performed by a second P450 monooxygenase. After the acetylation step, eremofortin A is converted to eremofortin C and then to PR-toxin. First the conversion of eremofortin A to eremofortin C proceeds by oxidation of the side chain of the molecule at C-12 and is catalyzed by the short-chain oxidoreductase prx1. The cytochrome P450 monooxygenase ORF6 is probably also involved in this step. The primary alcohol formed at C-12 is finally oxidized by the short-chain alcohol dehydrogenase prx4 that forms PR-toxin. This is Cytochrome P450 monooxygenase ORF6 from Penicillium roqueforti (strain FM164).